A 129-amino-acid polypeptide reads, in one-letter code: Small ribosomal subunit protein uS11 (129 aa).

It belongs to the universal ribosomal protein uS11 family. In terms of assembly, part of the 30S ribosomal subunit. Interacts with proteins S7 and S18. Binds to IF-3.

In terms of biological role, located on the platform of the 30S subunit, it bridges several disparate RNA helices of the 16S rRNA. Forms part of the Shine-Dalgarno cleft in the 70S ribosome. This Psychromonas ingrahamii (strain DSM 17664 / CCUG 51855 / 37) protein is Small ribosomal subunit protein uS11.